A 30-amino-acid chain; its full sequence is Cyclotide hypa-A (30 aa).

The cyclopeptide (Gly-Asn) cross-link spans 1 to 30 (GIPCAESCVYIPCTITALLGCSCKNKVCYN). Cystine bridges form between C4–C21, C8–C23, and C13–C28.

This is a cyclic peptide.

Its function is as follows. Probably participates in a plant defense mechanism. The chain is Cyclotide hypa-A from Pombalia parviflora (Violetilla).